The following is a 90-amino-acid chain: MLGTLFGSAIGGALAVAGAPVALAAMGFTGTGIAAASIAAKMMSAAAIANGGGVAAGSLVATLQSAGVLGLSTSTNAILGAAGAAVGALL.

An N-terminal signal peptide occupies residues 1–24 (MLGTLFGSAIGGALAVAGAPVALA). Helical transmembrane passes span 28–48 (FTGTGIAAASIAAKMMSAAAI) and 67–89 (GVLGLSTSTNAILGAAGAAVGAL).

Belongs to the IFI6/IFI27 family. As to quaternary structure, homodimer. Interacts with SKP2. Interacts with NR4A1. May interact with BCL2.

The protein resides in the nucleus inner membrane. May be involved in the interferon-induced negative regulation of the transcriptional activity of NR4A1, NR4A2 and NR4A3 through the enhancement of XPO1-mediated nuclear export of these nuclear receptors. Through the regulation of NR4A1 transcriptional activity, may play a role in the vascular response to injury. The protein is Interferon alpha-inducible protein 27-like protein 2A of Mus musculus (Mouse).